Here is a 486-residue protein sequence, read N- to C-terminus: MNINIGLSDVLLISPMIALFLASLLPITMKVLRGNREQHALITLGQALMGIVAAVVLLVVFGGSDKTAFNNGLIFDGVTQWMGIIALAGAGAAMVMMYENPSTTGKQFSELIFLAMSSAVGMLILVSAVDLLMVFIGLEMMSLALYLMIAMSHEEKLSKEAALKYFILGSFASAIFLYGVAFIFGSTGGTNILSFMDNAAELVQTSRLFLFGVTFVILGFCFKVSIAPFHAWTPDVYQGAPTPHTAFMATAVKTVSFAAFLRIIATKSLTGSDQLFDILQWMAVITMIVGNAAAIMQNNFKRMIAYSSVAHSGYLMVGLITAGVSDNGAFGASGVIFYLLAYGLMTIGAFAIAAMLEKSENHIVNIDDLAGFAKQRPMLALCLTVFLLSLAGIPPTLGFFGKFYMFNAAIGEGLLWLAIWGMLNSVIGVYYYLRPIVVMYMKEGNAEIAGHSLNATTVTAVVMALAIVLMGFVSGPIFSAVEKSLL.

Transmembrane regions (helical) follow at residues 5 to 25, 41 to 61, 77 to 97, 118 to 138, 165 to 185, 209 to 229, 245 to 265, 275 to 295, 304 to 324, 335 to 355, 380 to 400, 413 to 433, and 458 to 478; these read IGLSDVLLISPMIALFLASLL, LITLGQALMGIVAAVVLLVVF, GVTQWMGIIALAGAGAAMVMM, SAVGMLILVSAVDLLMVFIGL, YFILGSFASAIFLYGVAFIFG, FLFGVTFVILGFCFKVSIAPF, TAFMATAVKTVSFAAFLRIIA, LFDILQWMAVITMIVGNAAAI, IAYSSVAHSGYLMVGLITAGV, VIFYLLAYGLMTIGAFAIAAM, ALCLTVFLLSLAGIPPTLGFF, GLLWLAIWGMLNSVIGVYYYL, and VTAVVMALAIVLMGFVSGPIF.

Belongs to the complex I subunit 2 family. NDH-1 is composed of 14 different subunits. Subunits NuoA, H, J, K, L, M, N constitute the membrane sector of the complex.

The protein localises to the cell inner membrane. The enzyme catalyses a quinone + NADH + 5 H(+)(in) = a quinol + NAD(+) + 4 H(+)(out). Its function is as follows. NDH-1 shuttles electrons from NADH, via FMN and iron-sulfur (Fe-S) centers, to quinones in the respiratory chain. The immediate electron acceptor for the enzyme in this species is believed to be ubiquinone. Couples the redox reaction to proton translocation (for every two electrons transferred, four hydrogen ions are translocated across the cytoplasmic membrane), and thus conserves the redox energy in a proton gradient. This chain is NADH-quinone oxidoreductase subunit N, found in Bdellovibrio bacteriovorus (strain ATCC 15356 / DSM 50701 / NCIMB 9529 / HD100).